The chain runs to 1098 residues: Trehalose synthase complex regulatory subunit TSL1 (1098 aa).

Phosphoserine occurs at positions 49, 53, 56, 71, 77, 135, 147, and 161. Disordered regions lie at residues 59-86, 129-168, and 192-244; these read APAP…RASS, SVER…QQQQ, and SQTS…PSIK. Polar residues predominate over residues 72–86; the sequence is RSATRSPSAFNRASS. Tandem repeats lie at residues 144–150 and 158–164. The tract at residues 144–164 is 2 X 7 AA repeats of R-I-A-S-P-I-Q; it reads RIASPIQHEHDSGSRIASPIQ. Residues 213–227 show a composition bias toward polar residues; sequence RPTSAATSLVNRTKQ. Residues 228–242 show a composition bias toward low complexity; it reads GSASSGSSGSSAPPS. Phosphoserine is present on S229. T251 carries the post-translational modification Phosphothreonine. Residues 274–297 form a disordered region; it reads ADISSSETSSQHNESDPDDLTTAP. At S303 the chain carries Phosphoserine. The segment at 320-812 is TPS complex domain; it reads GGYSNKSKLK…FNQEGSKIFK (493 aa). T815 carries the post-translational modification Phosphothreonine. Residues 1000–1027 are disordered; the sequence is SSGQITNIQTPSQQNPSDQEQQPPASPT.

This sequence in the C-terminal section; belongs to the glycosyltransferase 20 family. As to quaternary structure, the trehalose synthase complex is composed of the two catalytic subunits TPS1 and TPS2, and at least one of the two regulatory subunits TPS3 or TSL1.

It is found in the cytoplasm. Regulatory subunit of the trehalose synthase complex that catalyzes the production of trehalose from glucose-6-phosphate and UDP-glucose in a two step process. May stabilize the trehalose synthase complex, and confer sensitivity to physiological concentrations of phosphate and to fructose 6-phosphate. The protein is Trehalose synthase complex regulatory subunit TSL1 (TSL1) of Saccharomyces cerevisiae (strain ATCC 204508 / S288c) (Baker's yeast).